Here is a 369-residue protein sequence, read N- to C-terminus: Beta-1,3-galactosyltransferase 9 (369 aa).

Residues 1 to 12 (MQVTFCRLRTHQ) are Cytoplasmic-facing. A helical; Signal-anchor for type II membrane protein membrane pass occupies residues 13–33 (WCFILFNVILFHALLFGTDFV). The Lumenal segment spans residues 34–369 (EEYFLHSLPY…IKNNLMYFAD (336 aa)). 3 N-linked (GlcNAc...) asparagine glycosylation sites follow: N66, N96, and N109.

Belongs to the glycosyltransferase 31 family.

The protein resides in the golgi apparatus membrane. In terms of biological role, putative glycosyltransferase that could catalyze the transfer of galactose residues from UDP-alpha-D-galactose. This is Beta-1,3-galactosyltransferase 9 from Homo sapiens (Human).